The sequence spans 424 residues: Probable ribonuclease FAU-1 (424 aa).

This sequence belongs to the FAU-1 family.

Probable RNase involved in rRNA stability through maturation and/or degradation of precursor rRNAs. Binds to RNA in loop regions with AU-rich sequences. The sequence is that of Probable ribonuclease FAU-1 from Saccharolobus islandicus (strain M.16.27) (Sulfolobus islandicus).